The sequence spans 214 residues: Pyridoxine/pyridoxamine 5'-phosphate oxidase (214 aa).

Substrate is bound by residues 9–12 (RRSY) and Lys-68. FMN is bound by residues 63–68 (RVVLLK), 78–79 (YT), Lys-85, and Gln-107. Residues Tyr-125, Arg-129, and Ser-133 each coordinate substrate. FMN contacts are provided by residues 142–143 (QS) and Trp-187. 193 to 195 (RLH) serves as a coordination point for substrate. Arg-197 contributes to the FMN binding site.

This sequence belongs to the pyridoxamine 5'-phosphate oxidase family. As to quaternary structure, homodimer. FMN is required as a cofactor.

The catalysed reaction is pyridoxamine 5'-phosphate + O2 + H2O = pyridoxal 5'-phosphate + H2O2 + NH4(+). The enzyme catalyses pyridoxine 5'-phosphate + O2 = pyridoxal 5'-phosphate + H2O2. Its pathway is cofactor metabolism; pyridoxal 5'-phosphate salvage; pyridoxal 5'-phosphate from pyridoxamine 5'-phosphate: step 1/1. It participates in cofactor metabolism; pyridoxal 5'-phosphate salvage; pyridoxal 5'-phosphate from pyridoxine 5'-phosphate: step 1/1. In terms of biological role, catalyzes the oxidation of either pyridoxine 5'-phosphate (PNP) or pyridoxamine 5'-phosphate (PMP) into pyridoxal 5'-phosphate (PLP). This is Pyridoxine/pyridoxamine 5'-phosphate oxidase from Christiangramia forsetii (strain DSM 17595 / CGMCC 1.15422 / KT0803) (Gramella forsetii).